The sequence spans 241 residues: Attacin-C (241 aa).

The signal sequence occupies residues 1–21 (MSKIVLLIVVIVGVLGSLAVA). Residues 22–23 (LP) constitute a propeptide that is removed on maturation. Gln-24 is subject to Pyrrolidone carboxylic acid. The O-linked (GalNAc...) threonine glycan is linked to Thr-39. Ser-127 carries the phosphoserine modification.

It belongs to the attacin/sarcotoxin-2 family. Hemolymph (at protein level).

It localises to the secreted. In terms of biological role, has antimicrobial activity in synergy with other peptides. Strongest activity observed against E.cloacae. This chain is Attacin-C, found in Drosophila melanogaster (Fruit fly).